Reading from the N-terminus, the 819-residue chain is DNA topoisomerase 4 subunit A (819 aa).

Positions 30 to 496 (LPDIRDGLKP…QIIEIDTASL (467 aa)) constitute a Topo IIA-type catalytic domain. Catalysis depends on Y118, which acts as the O-(5'-phospho-DNA)-tyrosine intermediate.

This sequence belongs to the type II topoisomerase GyrA/ParC subunit family. ParC type 2 subfamily. As to quaternary structure, heterotetramer composed of ParC and ParE.

Its subcellular location is the cell membrane. The catalysed reaction is ATP-dependent breakage, passage and rejoining of double-stranded DNA.. Topoisomerase IV is essential for chromosome segregation. It relaxes supercoiled DNA. Performs the decatenation events required during the replication of a circular DNA molecule. The protein is DNA topoisomerase 4 subunit A of Streptococcus pyogenes serotype M1.